A 119-amino-acid polypeptide reads, in one-letter code: Large ribosomal subunit protein bL20 (119 aa).

It belongs to the bacterial ribosomal protein bL20 family.

Its function is as follows. Binds directly to 23S ribosomal RNA and is necessary for the in vitro assembly process of the 50S ribosomal subunit. It is not involved in the protein synthesizing functions of that subunit. The protein is Large ribosomal subunit protein bL20 of Geobacillus thermodenitrificans (strain NG80-2).